The primary structure comprises 192 residues: Type 1 phosphatases regulator YPI2 (192 aa).

2 disordered regions span residues 1-53 and 65-192; these read MLQR…GKHK and EFGQ…PVQK. Positions 8 to 18 are enriched in low complexity; that stretch reads QTSSSTQTETT. A compositionally biased stretch (basic and acidic residues) spans 25–49; that stretch reads RRPETRQKEDSKVKWTEDVIDNEHM. A compositionally biased stretch (low complexity) spans 69–79; it reads SSDESSDSSSD. A compositionally biased stretch (basic and acidic residues) spans 86-103; it reads YERNNDFDQNHRHSHNFD. The segment covering 134 to 148 has biased composition (polar residues); that stretch reads KGNTGMSKPSSSSPD. Positions 157-169 are enriched in basic residues; sequence IHKRNKKVRKPKR.

The protein belongs to the YPI1 family.

The protein localises to the nucleus. Its function is as follows. Regulator of type 1 phosphatases which maintains protein phosphatase activity under strict control. This chain is Type 1 phosphatases regulator YPI2 (YPI2), found in Scheffersomyces stipitis (strain ATCC 58785 / CBS 6054 / NBRC 10063 / NRRL Y-11545) (Yeast).